Reading from the N-terminus, the 193-residue chain is NADH-quinone oxidoreductase subunit B (193 aa).

Positions 72, 73, 137, and 167 each coordinate [4Fe-4S] cluster.

Belongs to the complex I 20 kDa subunit family. In terms of assembly, NDH-1 is composed of 14 different subunits. Subunits NuoB, C, D, E, F, and G constitute the peripheral sector of the complex. Requires [4Fe-4S] cluster as cofactor.

It localises to the cell inner membrane. It catalyses the reaction a quinone + NADH + 5 H(+)(in) = a quinol + NAD(+) + 4 H(+)(out). Functionally, NDH-1 shuttles electrons from NADH, via FMN and iron-sulfur (Fe-S) centers, to quinones in the respiratory chain. Couples the redox reaction to proton translocation (for every two electrons transferred, four hydrogen ions are translocated across the cytoplasmic membrane), and thus conserves the redox energy in a proton gradient. This chain is NADH-quinone oxidoreductase subunit B, found in Brucella anthropi (strain ATCC 49188 / DSM 6882 / CCUG 24695 / JCM 21032 / LMG 3331 / NBRC 15819 / NCTC 12168 / Alc 37) (Ochrobactrum anthropi).